Here is a 117-residue protein sequence, read N- to C-terminus: NADH-ubiquinone oxidoreductase chain 3 (117 aa).

3 helical membrane passes run 4 to 24, 60 to 80, and 86 to 106; these read IIII…LASI, ITII…MIII, and IMIW…GLYH.

This sequence belongs to the complex I subunit 3 family.

It is found in the mitochondrion membrane. It catalyses the reaction a ubiquinone + NADH + 5 H(+)(in) = a ubiquinol + NAD(+) + 4 H(+)(out). Functionally, core subunit of the mitochondrial membrane respiratory chain NADH dehydrogenase (Complex I) that is believed to belong to the minimal assembly required for catalysis. Complex I functions in the transfer of electrons from NADH to the respiratory chain. The immediate electron acceptor for the enzyme is believed to be ubiquinone. The chain is NADH-ubiquinone oxidoreductase chain 3 (mt:ND3) from Drosophila yakuba (Fruit fly).